The primary structure comprises 701 residues: Elongation factor G (701 aa).

One can recognise a tr-type G domain in the interval 8-290; sequence KHYRNIGISA…AVIEYLPAPI (283 aa). Residues 17–24, 88–92, and 142–145 each bind GTP; these read AHIDAGKT, DTPGH, and NKMD.

Belongs to the TRAFAC class translation factor GTPase superfamily. Classic translation factor GTPase family. EF-G/EF-2 subfamily.

The protein resides in the cytoplasm. Its function is as follows. Catalyzes the GTP-dependent ribosomal translocation step during translation elongation. During this step, the ribosome changes from the pre-translocational (PRE) to the post-translocational (POST) state as the newly formed A-site-bound peptidyl-tRNA and P-site-bound deacylated tRNA move to the P and E sites, respectively. Catalyzes the coordinated movement of the two tRNA molecules, the mRNA and conformational changes in the ribosome. The protein is Elongation factor G of Hamiltonella defensa subsp. Acyrthosiphon pisum (strain 5AT).